Here is a 202-residue protein sequence, read N- to C-terminus: Dephospho-CoA kinase (202 aa).

The DPCK domain maps to 3 to 202 (TIGITGGIGS…TKRPNPPDRL (200 aa)). Residue 11 to 16 (GSGKSV) participates in ATP binding. The disordered stretch occupies residues 138–161 (RAMARDGSSAETMRQRMLSQEREQ).

It belongs to the CoaE family.

The protein localises to the cytoplasm. It catalyses the reaction 3'-dephospho-CoA + ATP = ADP + CoA + H(+). It functions in the pathway cofactor biosynthesis; coenzyme A biosynthesis; CoA from (R)-pantothenate: step 5/5. Catalyzes the phosphorylation of the 3'-hydroxyl group of dephosphocoenzyme A to form coenzyme A. This Porphyromonas gingivalis (strain ATCC BAA-308 / W83) protein is Dephospho-CoA kinase.